A 287-amino-acid polypeptide reads, in one-letter code: MELVIISGRSGSGKSVALRALEDVGYYCVDNLPFPLIAELASFLLASDCSAVVSLDIRNFPENLTRIDELLHQLSQLTINTKMIFLDCESATLIRRYSDSRRLHPLSNQDLSLASAIELENTLLDPLRQQADYLIDTTHSSPHELAANLRHILRGSTEKELNIVFESFGFKYGLSADADYVFDVRFLPNPHWHAELRAMTGLEQPVIDFLERQTEVHNFIYQTRNYLETWLPMLEKNNRSYLTIAFGCTGGKHRSVFITEQLAKYFQSRGKNVKIRHRSLEKYHKKT.

8–15 serves as a coordination point for ATP; the sequence is GRSGSGKS. Residue 56-59 participates in GTP binding; the sequence is DIRN.

Belongs to the RapZ-like family.

Displays ATPase and GTPase activities. This chain is Nucleotide-binding protein HD_0584, found in Haemophilus ducreyi (strain 35000HP / ATCC 700724).